The chain runs to 61 residues: Small ribosomal subunit protein uS14 (61 aa).

Residues Cys-24, Cys-27, Cys-40, and Cys-43 each coordinate Zn(2+).

The protein belongs to the universal ribosomal protein uS14 family. Zinc-binding uS14 subfamily. Part of the 30S ribosomal subunit. Contacts proteins S3 and S10. Requires Zn(2+) as cofactor.

In terms of biological role, binds 16S rRNA, required for the assembly of 30S particles and may also be responsible for determining the conformation of the 16S rRNA at the A site. The protein is Small ribosomal subunit protein uS14 of Desulfatibacillum aliphaticivorans.